The primary structure comprises 210 residues: Somatotropin (210 aa).

A signal peptide spans 1-22; it reads MGQVFLLMPVLLVSCFLSHGAA. Residue His-38 participates in Zn(2+) binding. An intrachain disulfide couples Cys-71 to Cys-183. Position 192 (Glu-192) interacts with Zn(2+). An intrachain disulfide couples Cys-200 to Cys-208.

Belongs to the somatotropin/prolactin family.

Its subcellular location is the secreted. Growth hormone plays an important role in growth control and is involved in the regulation of several anabolic processes. Implicated as an osmoregulatory substance important for seawater adaptation. The polypeptide is Somatotropin (gh) (Oncorhynchus masou (Cherry salmon)).